A 434-amino-acid polypeptide reads, in one-letter code: MFS-type transporter AFUA_1G00970 (434 aa).

12 consecutive transmembrane segments (helical) span residues 21-41 (VIGG…FGVF), 60-80 (WIGS…GVLV), 87-107 (VLLI…SLCS), 112-132 (IFLA…WPPF), 145-165 (LALG…SIMI), 182-202 (VLGF…TEPP), 240-260 (VFIS…NPFF), 278-298 (YMIS…GIVA), 301-321 (VGHY…SFCW), 327-347 (LTGL…ILSL), 364-384 (AIGF…PIGG), and 393-413 (LSLS…MGYA). Residues 201–225 (PPKQSQPQPRPALEATVEGGSASPT) are disordered.

This sequence belongs to the major facilitator superfamily. Monocarboxylate porter (TC 2.A.1.13) family.

It localises to the cell membrane. Functionally, MFS-type transporter; part of the gene cluster that mediates the biosynthesis of fumigermin that inhibits germination of spores of the inducing S.rapamycinicus, and thus helps the fungus to defend resources in the shared habitat against a bacterial competitor. May be involved in the secretion of fumigermin. In Aspergillus fumigatus (strain ATCC MYA-4609 / CBS 101355 / FGSC A1100 / Af293) (Neosartorya fumigata), this protein is MFS-type transporter AFUA_1G00970.